The following is a 463-amino-acid chain: Chromogranin-A (463 aa).

A signal peptide spans 1–18 (MRSTAVLALLLCAGQVFA). Cysteines 35 and 56 form a disulfide. Residues 88–440 (KERAQQPLKQ…ANRRAEDQEL (353 aa)) are disordered. Over residues 92 to 116 (QQPLKQQQPPKQQQQQQQQQQQEQQ) the composition is skewed to low complexity. S119 carries the phosphoserine modification. Residues 134-160 (DAKHRDAAAEVPSRDTMEKRKDSDKGQ) show a composition bias toward basic and acidic residues. A compositionally biased stretch (polar residues) spans 196–208 (TATNTQSPTSLPS). S220, S282, and S308 each carry phosphoserine. The segment covering 301 to 310 (GKGELEHSQQ) has biased composition (basic and acidic residues). Residue G329 is modified to Glycine amide. 2 stretches are compositionally biased toward basic and acidic residues: residues 331–340 (KGRELEHKQE) and 348–375 (RLSR…KRLE). Phosphoserine is present on residues S350 and S383. M384 is subject to Methionine sulfoxide. Residues 409–437 (SSREDSVEARSDFEEKKEEEGSANRRAED) show a composition bias toward basic and acidic residues. 3 positions are modified to phosphoserine: S410, S414, and S430. S430 carries O-linked (Xyl...) (chondroitin sulfate) serine glycosylation. Q438 is subject to Pyrrolidone carboxylic acid. Residue S444 is modified to Phosphoserine.

Belongs to the chromogranin/secretogranin protein family. Self-interacts; self-assembly is promoted in vitro by chondroitin sulfate attachment which occurs at mildly acidic pH conditions. Interacts with SCG3; this interaction is optimal in conditions mimicking the lumenal milieu of the trans-Golgi network, i.e. pH 5.5 and 10 mM Ca(+2). Interacts with ITPR1 in the secretory granules. In terms of processing, O-glycosylated; contains chondroitin sulfate (CS). CS attachment is pH-dependent, being observed at mildly acidic conditions of pH 5 but not at neutral pH, and promotes self-assembly in vitro.

It is found in the cytoplasmic vesicle. Its subcellular location is the secretory vesicle. It localises to the neuronal dense core vesicle. The protein localises to the secreted. Functionally, strongly inhibits glucose induced insulin release from the pancreas. In terms of biological role, inhibits catecholamine release from chromaffin cells and noradrenergic neurons by acting as a non-competitive nicotinic cholinergic antagonist. Can induce mast cell migration, degranulation and production of cytokines and chemokines. Regulates granule biogenesis in endocrine cells by up-regulating the transcription of protease nexin 1 (SERPINE2) via a cAMP-PKA-SP1 pathway. This leads to inhibition of granule protein degradation in the Golgi complex which in turn promotes granule formation. Pyroglutaminated (pGlu)-serpinin exerts an antiapoptotic effect on cells exposed to oxidative stress. The sequence is that of Chromogranin-A (Chga) from Mus musculus (Mouse).